A 122-amino-acid polypeptide reads, in one-letter code: Large ribosomal subunit protein uL14 (122 aa).

Belongs to the universal ribosomal protein uL14 family. As to quaternary structure, part of the 50S ribosomal subunit. Forms a cluster with proteins L3 and L19. In the 70S ribosome, L14 and L19 interact and together make contacts with the 16S rRNA in bridges B5 and B8.

In terms of biological role, binds to 23S rRNA. Forms part of two intersubunit bridges in the 70S ribosome. This is Large ribosomal subunit protein uL14 from Sulfurihydrogenibium sp. (strain YO3AOP1).